Reading from the N-terminus, the 137-residue chain is MTLNLCVLTPNRTVWDSEVKEIILSTNSGQIGVLKNHAPIATALDIGILKIRLTNQQWVTMALMGGFARIGNNEITILVNDAEKSIDIDPQEAQQTLKIAEANLNKAEGKRQTIEANLALRRARTRVETILESINRF.

Belongs to the ATPase epsilon chain family. F-type ATPases have 2 components, CF(1) - the catalytic core - and CF(0) - the membrane proton channel. CF(1) has five subunits: alpha(3), beta(3), gamma(1), delta(1), epsilon(1). CF(0) has three main subunits: a, b and c.

Its subcellular location is the plastid. It localises to the chloroplast thylakoid membrane. Produces ATP from ADP in the presence of a proton gradient across the membrane. This is ATP synthase epsilon chain, chloroplastic from Medicago sativa (Alfalfa).